The chain runs to 166 residues: Ribonuclease H (166 aa).

Residues 10 to 151 form the RNase H type-1 domain; sequence KRVRVDMFTD…ADELARRGTS (142 aa). Mg(2+)-binding residues include Asp19, Glu57, Asp79, and Asp143. The span at 145-157 shows a compositional bias: basic and acidic residues; it reads LARRGTSEARQGK. The segment at 145–166 is disordered; that stretch reads LARRGTSEARQGKVDGQSSTIL.

This sequence belongs to the RNase H family. As to quaternary structure, monomer. It depends on Mg(2+) as a cofactor.

The protein localises to the cytoplasm. The enzyme catalyses Endonucleolytic cleavage to 5'-phosphomonoester.. Functionally, endonuclease that specifically degrades the RNA of RNA-DNA hybrids. The polypeptide is Ribonuclease H (Rhodospirillum rubrum (strain ATCC 11170 / ATH 1.1.1 / DSM 467 / LMG 4362 / NCIMB 8255 / S1)).